Here is a 277-residue protein sequence, read N- to C-terminus: MLLAERVEQSEHDAGWSAHLQLRFVEGGGVTRLGARRHFGPLLVQRPFYPEGAPCHVYVLHPPGGIVAGDRLELDIHLEPGSHALLTMPGASKFYRSIGPTARLTQRFHLQAGSTLEWLPQDSIFFSGARASLDSRFTLEPGARLLAWETLCLGRPVMGERFDQGALDSRLSIELPDDPGLHERLRISGGQLEKLGGHPLLATFCASPADPSVLEKVRHLLDELKTPAGATLLGSLLVIRLLDHDNQHLQHTLQRLWHVLRPAVLGLPACPPRIWAT.

The protein belongs to the UreD family. As to quaternary structure, ureD, UreF and UreG form a complex that acts as a GTP-hydrolysis-dependent molecular chaperone, activating the urease apoprotein by helping to assemble the nickel containing metallocenter of UreC. The UreE protein probably delivers the nickel.

The protein localises to the cytoplasm. Functionally, required for maturation of urease via the functional incorporation of the urease nickel metallocenter. The chain is Urease accessory protein UreD from Pseudomonas putida (strain W619).